Reading from the N-terminus, the 79-residue chain is Putative membrane protein insertion efficiency factor (79 aa).

Belongs to the UPF0161 family.

The protein resides in the cell inner membrane. Could be involved in insertion of integral membrane proteins into the membrane. The protein is Putative membrane protein insertion efficiency factor of Thermotoga neapolitana (strain ATCC 49049 / DSM 4359 / NBRC 107923 / NS-E).